The chain runs to 471 residues: 5-hydroxytryptamine receptor 2A (471 aa).

Topologically, residues 1–80 (MEILCEDNTS…LQEKNWSALL (80 aa)) are extracellular. Residues Asn8, Asn38, Asn44, Asn51, and Asn54 are each glycosylated (N-linked (GlcNAc...) asparagine). Residues 81-97 (TAVVIILTIAGNILVIM) form a helical membrane-spanning segment. At 98 to 111 (AVSLEKKLQNATNY) the chain is on the cytoplasmic side. The chain crosses the membrane as a helical span at residues 112–137 (FLMSLAIADMLLGFLVMPVSMLTILY). Residues 138 to 146 (GYRWPLPSK) lie on the Extracellular side of the membrane. Residues 147–171 (LCAVWIYLDVLFSTASIMHLCAISL) traverse the membrane as a helical segment. Cysteines 148 and 227 form a disulfide. Asp155 serves as a coordination point for serotonin. The DRY motif; important for ligand-induced conformation changes signature appears at 172–174 (DRY). At 172–191 (DRYVAIQNPIHHSRFNSRTK) the chain is on the cytoplasmic side. The helical transmembrane segment at 192–215 (AFLKIIAVWTISVGVSMPIPVFGL) threads the bilayer. Topologically, residues 216 to 232 (QDDSKVFKQGSCLLADD) are extracellular. The helical transmembrane segment at 233 to 258 (NFVLIGSFVAFFIPLTIMVITYFLTI) threads the bilayer. At 259–322 (KSLQKEATLC…QSISNEQKAC (64 aa)) the chain is on the cytoplasmic side. Ser280 is modified (phosphoserine). Residues 323 to 348 (KVLGIVFFLFVVMWCPFFITNIMAVI) traverse the membrane as a helical segment. Position 343 (Asn343) interacts with serotonin. Cys349 and Cys353 are disulfide-bonded. Residues 349–356 (CKESCNEH) lie on the Extracellular side of the membrane. The helical transmembrane segment at 357 to 382 (VIGALLNVFVWIGYLSSAVNPLVYTL) threads the bilayer. The short motif at 376–380 (NPLVY) is the NPxxY motif; important for ligand-induced conformation changes and signaling element. Topologically, residues 383–471 (FNKTYRSAFS…NTVNEKVSCV (89 aa)) are cytoplasmic. Residues 469–471 (SCV) carry the PDZ-binding motif.

Belongs to the G-protein coupled receptor 1 family. In terms of assembly, interacts (via C-terminus) with MPDZ and PATJ. May interact (via C-terminus) with MPP3, PRDX6, DLG4, DLG1, CASK, APBA1 and MAGI2. Interacts with GRM2 and DRD2; this may affect signaling.

It localises to the cell membrane. The protein localises to the cell projection. Its subcellular location is the dendrite. The protein resides in the axon. It is found in the cytoplasmic vesicle. It localises to the membrane. The protein localises to the caveola. Its subcellular location is the presynapse. With respect to regulation, G-protein coupled receptor activity is regulated by lipids: oleamide increases HTR2A-mediated activity. Functionally, G-protein coupled receptor for 5-hydroxytryptamine (serotonin). Also functions as a receptor for various drugs and psychoactive substances, including mescaline, psilocybin, 1-(2,5-dimethoxy-4-iodophenyl)-2-aminopropane (DOI) and lysergic acid diethylamide (LSD). Ligand binding causes a conformation change that triggers signaling via guanine nucleotide-binding proteins (G proteins) and modulates the activity of downstream effectors. HTR2A is coupled to G(q)/G(11) G alpha proteins and activates phospholipase C-beta, releasing diacylglycerol (DAG) and inositol 1,4,5-trisphosphate (IP3) second messengers that modulate the activity of phosphatidylinositol 3-kinase and promote the release of Ca(2+) ions from intracellular stores, respectively. Beta-arrestin family members inhibit signaling via G proteins and mediate activation of alternative signaling pathways. Affects neural activity, perception, cognition and mood. Plays a role in the regulation of behavior, including responses to anxiogenic situations and psychoactive substances. Plays a role in intestinal smooth muscle contraction, and may play a role in arterial vasoconstriction. This is 5-hydroxytryptamine receptor 2A (HTR2A) from Cricetulus griseus (Chinese hamster).